The primary structure comprises 115 residues: Con-Ins T1A (115 aa).

Positions 1 to 24 are cleaved as a signal peptide; the sequence is MTTSFYFLLMALGLLLYVCQSSFG. A propeptide spanning residues 25-29 is cleaved from the precursor; sequence NQHTR. At Pro34 the chain carries 4-hydroxyproline; partial. Intrachain disulfides connect Cys38–Cys101, Cys50–Cys114, and Cys100–Cys105. Glu41 carries the 4-carboxyglutamate modification. A propeptide spans 53-94 (c peptide); the sequence is KRNDAGKKRGRASPLWQRGGSLSMLKARAKRNEAFHLQRAHR. At Glu98 the chain carries 4-carboxyglutamate. The residue at position 104 (Pro104) is a 4-hydroxyproline; partial. Position 109 is a 4-carboxyglutamate; partial (Glu109). Cys114 bears the Cysteine amide mark.

Belongs to the insulin family. Heterodimer of A and B chains; disulfide-linked. In terms of tissue distribution, expressed by the venom gland.

The protein localises to the secreted. Functionally, this venom insulin, from a fish-hunting cone snail, facilitates prey capture by rapidly inducing hypoglycemic shock. It is one of the smallest known insulin found in nature and lacks the C-terminal segment of the B chain that, in human insulin, mediates engagement of the insulin receptor (INSR) and assembly of the hormone's hexameric storage form. Despite lacking this segment, it both binds and activates human insulin receptor (long isoform (HIR-B)) with a high potency (EC(50)=12.0 nM). In vivo, intraperitoneal injection of this peptide into zebrafish lowers blood glucose with a lower potency than human insulin. In addition, when applied to water, this peptide reduces overall locomotor activity of zebrafish larvae, observed as a significant decrease in the percentage of time spent swimming and movement frequency. When tested on a mouse model of diabetes, this insulin also lowers blood glucose with a 10-fold lower potency than human insulin. The protein is Con-Ins T1A of Conus tulipa (Fish-hunting cone snail).